A 678-amino-acid polypeptide reads, in one-letter code: DNA ligase (678 aa).

Residues 34-38 (DSEYD), 83-84 (SL), and glutamate 114 each bind NAD(+). The N6-AMP-lysine intermediate role is filled by lysine 116. The NAD(+) site is built by arginine 137, glutamate 176, lysine 293, and lysine 317. 4 residues coordinate Zn(2+): cysteine 411, cysteine 414, cysteine 429, and cysteine 435. The BRCT domain maps to 594 to 678 (PTRQPLNGES…LMAGYGQTLS (85 aa)).

Belongs to the NAD-dependent DNA ligase family. LigA subfamily. The cofactor is Mg(2+). Mn(2+) serves as cofactor.

It catalyses the reaction NAD(+) + (deoxyribonucleotide)n-3'-hydroxyl + 5'-phospho-(deoxyribonucleotide)m = (deoxyribonucleotide)n+m + AMP + beta-nicotinamide D-nucleotide.. Functionally, DNA ligase that catalyzes the formation of phosphodiester linkages between 5'-phosphoryl and 3'-hydroxyl groups in double-stranded DNA using NAD as a coenzyme and as the energy source for the reaction. It is essential for DNA replication and repair of damaged DNA. The protein is DNA ligase of Acinetobacter baumannii (strain SDF).